We begin with the raw amino-acid sequence, 633 residues long: tRNA uridine 5-carboxymethylaminomethyl modification enzyme MnmG (633 aa).

Residues 15 to 20 (GAGHAG), Val-127, and Ser-182 contribute to the FAD site. An NAD(+)-binding site is contributed by 276–290 (GPRYCPSIEDKIVRF). Position 373 (Gln-373) interacts with FAD.

It belongs to the MnmG family. As to quaternary structure, homodimer. Heterotetramer of two MnmE and two MnmG subunits. It depends on FAD as a cofactor.

Its subcellular location is the cytoplasm. In terms of biological role, NAD-binding protein involved in the addition of a carboxymethylaminomethyl (cmnm) group at the wobble position (U34) of certain tRNAs, forming tRNA-cmnm(5)s(2)U34. The polypeptide is tRNA uridine 5-carboxymethylaminomethyl modification enzyme MnmG (Streptococcus thermophilus (strain CNRZ 1066)).